The following is a 646-amino-acid chain: Probable lysosomal cobalamin transporter (646 aa).

5 consecutive transmembrane segments (helical) span residues Leu-11 to Thr-31, Ile-42 to Leu-62, Thr-102 to Phe-122, Leu-149 to Gly-169, and Ala-193 to Thr-213. Residue Asn-297 is glycosylated (N-linked (GlcNAc...) asparagine). 2 helical membrane passes run Leu-317–Thr-337 and Ile-380–Ile-400. Disordered regions lie at residues Gln-459–Arg-588 and Val-603–Glu-623. Low complexity-rich tracts occupy residues Pro-460–Ala-490 and Pro-517–Arg-543. N-linked (GlcNAc...) asparagine glycosylation is present at Asn-545. Residues Ala-565 to Arg-582 are compositionally biased toward low complexity. Asn-626 carries N-linked (GlcNAc...) asparagine glycosylation.

This sequence belongs to the LIMR family. LMBRD1 subfamily.

The protein localises to the lysosome membrane. In terms of biological role, probable lysosomal cobalamin transporter. Required to export cobalamin from lysosomes allowing its conversion to cofactors. In Chaetomium globosum (strain ATCC 6205 / CBS 148.51 / DSM 1962 / NBRC 6347 / NRRL 1970) (Soil fungus), this protein is Probable lysosomal cobalamin transporter.